A 364-amino-acid chain; its full sequence is MGDNMDFSEHYGNFSENYVTESYGEFDLYYDPLNETSLSEQGHRSIWVLSIVLCSIACVLGITGNAFVIWIAGVKMKRTVNTIWFVNLAAADLLCCVSIPFSIADIILNSHWPYGEAMCKILPSMVVLNMFASVFTLVLISLDRFALVILPVWAQNHRSITLAWLLCGLVWVLGLLLSLPSMIYREIVVHDDMNITLCIYNHLQDKTEGNQSAIKAIHVTRLILGFLIPLLVIAVCYLLIGRRVSSGRFKSQRAFQIILVVVTTFFVCWLPYHVIGLVIEYGKEASQVMARALDPLAISLAYVNSCLNPVLYVFMGQDFKERVRVSLRKIFEKVFSEDVTLRSSVYSKGQSQLSRATNSSEAQV.

Topologically, residues 1–50 (MGDNMDFSEHYGNFSENYVTESYGEFDLYYDPLNETSLSEQGHRSIWVLS) are extracellular. Asn-13 and Asn-34 each carry an N-linked (GlcNAc...) asparagine glycan. The chain crosses the membrane as a helical span at residues 51 to 71 (IVLCSIACVLGITGNAFVIWI). Residues 72–82 (AGVKMKRTVNT) lie on the Cytoplasmic side of the membrane. Residues 83–103 (IWFVNLAAADLLCCVSIPFSI) traverse the membrane as a helical segment. Topologically, residues 104–120 (ADIILNSHWPYGEAMCK) are extracellular. A disulfide bridge connects residues Cys-119 and Cys-198. The helical transmembrane segment at 121-141 (ILPSMVVLNMFASVFTLVLIS) threads the bilayer. The Cytoplasmic portion of the chain corresponds to 142–159 (LDRFALVILPVWAQNHRS). A helical membrane pass occupies residues 160-180 (ITLAWLLCGLVWVLGLLLSLP). Over 181-220 (SMIYREIVVHDDMNITLCIYNHLQDKTEGNQSAIKAIHVT) the chain is Extracellular. Residues 221–241 (RLILGFLIPLLVIAVCYLLIG) form a helical membrane-spanning segment. The Cytoplasmic portion of the chain corresponds to 242–256 (RRVSSGRFKSQRAFQ). Residues 257 to 277 (IILVVVTTFFVCWLPYHVIGL) traverse the membrane as a helical segment. Over 278-295 (VIEYGKEASQVMARALDP) the chain is Extracellular. A helical transmembrane segment spans residues 296 to 316 (LAISLAYVNSCLNPVLYVFMG). The Cytoplasmic portion of the chain corresponds to 317-364 (QDFKERVRVSLRKIFEKVFSEDVTLRSSVYSKGQSQLSRATNSSEAQV).

It belongs to the G-protein coupled receptor 1 family.

The protein resides in the cell membrane. Its function is as follows. Receptor for the chemotactic and inflammatory peptide anaphylatoxin C3a. This receptor stimulates chemotaxis, granule enzyme release and superoxide anion production. The chain is C3a anaphylatoxin chemotactic receptor (c3ar1) from Oncorhynchus mykiss (Rainbow trout).